The primary structure comprises 344 residues: Protein-glutamate methylesterase/protein-glutamine glutaminase 1 (344 aa).

The 118-residue stretch at 5–122 (RVLVVDDSAT…GTQEALAEIV (118 aa)) folds into the Response regulatory domain. Asp56 is subject to 4-aspartylphosphate. A CheB-type methylesterase domain is found at 151 to 343 (FMPSGDIVAI…QSILDLASAR (193 aa)). Active-site residues include Ser163, His189, and Asp285.

It belongs to the CheB family. In terms of processing, phosphorylated by CheA. Phosphorylation of the N-terminal regulatory domain activates the methylesterase activity.

Its subcellular location is the cytoplasm. It carries out the reaction [protein]-L-glutamate 5-O-methyl ester + H2O = L-glutamyl-[protein] + methanol + H(+). It catalyses the reaction L-glutaminyl-[protein] + H2O = L-glutamyl-[protein] + NH4(+). In terms of biological role, involved in chemotaxis. Part of a chemotaxis signal transduction system that modulates chemotaxis in response to various stimuli. Catalyzes the demethylation of specific methylglutamate residues introduced into the chemoreceptors (methyl-accepting chemotaxis proteins or MCP) by CheR. Also mediates the irreversible deamidation of specific glutamine residues to glutamic acid. The sequence is that of Protein-glutamate methylesterase/protein-glutamine glutaminase 1 from Caulobacter vibrioides (strain ATCC 19089 / CIP 103742 / CB 15) (Caulobacter crescentus).